The sequence spans 330 residues: MTTAIGKKTTKLEPFKMERGVKYRDAAKTSVIQVRNIDPDQELLKKPEWMKIKLPTNSAKIDSIKYGMRRHGLHSVCEEASCPNLHECFNHGTATFMIMGAICTRRCPFCDVAHGKPLPLDPYEPRKVAETVQDMKLKYVVITSVDRDDLADRGAAHFAATVREIKALNPECKVEILVPDFRGRVEQAVAILKQNPPDVFNHNLENVPRLYREIRPGADYKWSLELLKIFKQEFPNIPTKSGLMVGLGETNEEILAVMQDLRDHGVTMLTVGQYLQPSRHHLRVERYVPPAEFEMFRSEAEKMGFEHAACGPFVRSSYHADLQAKGELVK.

Residues cysteine 77, cysteine 82, cysteine 88, cysteine 103, cysteine 107, cysteine 110, and serine 317 each contribute to the [4Fe-4S] cluster site. One can recognise a Radical SAM core domain in the interval 89–306 (FNHGTATFMI…RSEAEKMGFE (218 aa)).

This sequence belongs to the radical SAM superfamily. Lipoyl synthase family. [4Fe-4S] cluster is required as a cofactor.

The protein resides in the cytoplasm. It carries out the reaction [[Fe-S] cluster scaffold protein carrying a second [4Fe-4S](2+) cluster] + N(6)-octanoyl-L-lysyl-[protein] + 2 oxidized [2Fe-2S]-[ferredoxin] + 2 S-adenosyl-L-methionine + 4 H(+) = [[Fe-S] cluster scaffold protein] + N(6)-[(R)-dihydrolipoyl]-L-lysyl-[protein] + 4 Fe(3+) + 2 hydrogen sulfide + 2 5'-deoxyadenosine + 2 L-methionine + 2 reduced [2Fe-2S]-[ferredoxin]. It functions in the pathway protein modification; protein lipoylation via endogenous pathway; protein N(6)-(lipoyl)lysine from octanoyl-[acyl-carrier-protein]: step 2/2. Functionally, catalyzes the radical-mediated insertion of two sulfur atoms into the C-6 and C-8 positions of the octanoyl moiety bound to the lipoyl domains of lipoate-dependent enzymes, thereby converting the octanoylated domains into lipoylated derivatives. The protein is Lipoyl synthase of Haemophilus ducreyi (strain 35000HP / ATCC 700724).